The chain runs to 436 residues: UDP-N-acetylmuramoylalanine--D-glutamate ligase (436 aa).

Residue 112 to 118 (GSNGKST) coordinates ATP.

The protein belongs to the MurCDEF family.

The protein resides in the cytoplasm. It catalyses the reaction UDP-N-acetyl-alpha-D-muramoyl-L-alanine + D-glutamate + ATP = UDP-N-acetyl-alpha-D-muramoyl-L-alanyl-D-glutamate + ADP + phosphate + H(+). Its pathway is cell wall biogenesis; peptidoglycan biosynthesis. Functionally, cell wall formation. Catalyzes the addition of glutamate to the nucleotide precursor UDP-N-acetylmuramoyl-L-alanine (UMA). This Photorhabdus laumondii subsp. laumondii (strain DSM 15139 / CIP 105565 / TT01) (Photorhabdus luminescens subsp. laumondii) protein is UDP-N-acetylmuramoylalanine--D-glutamate ligase.